The primary structure comprises 448 residues: N-succinylarginine dihydrolase (448 aa).

Residues glycine 19–serine 28, asparagine 110, and histidine 137–arginine 138 contribute to the substrate site. Residue glutamate 174 is part of the active site. Arginine 214 is a binding site for substrate. Residue histidine 250 is part of the active site. Residues aspartate 252 and asparagine 365 each contribute to the substrate site. The active-site Nucleophile is the cysteine 371.

This sequence belongs to the succinylarginine dihydrolase family. Homodimer.

The catalysed reaction is N(2)-succinyl-L-arginine + 2 H2O + 2 H(+) = N(2)-succinyl-L-ornithine + 2 NH4(+) + CO2. The protein operates within amino-acid degradation; L-arginine degradation via AST pathway; L-glutamate and succinate from L-arginine: step 2/5. Functionally, catalyzes the hydrolysis of N(2)-succinylarginine into N(2)-succinylornithine, ammonia and CO(2). This chain is N-succinylarginine dihydrolase, found in Pseudomonas savastanoi pv. phaseolicola (strain 1448A / Race 6) (Pseudomonas syringae pv. phaseolicola (strain 1448A / Race 6)).